Here is a 258-residue protein sequence, read N- to C-terminus: Glucanase inhibitor protein 3 (258 aa).

The signal sequence occupies residues 1-19 (MKIISAVAASSIALGAVSA). Residues 29–256 (VLGGAVVPSG…ALEWINSITK (228 aa)) enclose the Peptidase S1 domain. Cysteine 56 and cysteine 72 are oxidised to a cystine. Residues asparagine 90, asparagine 105, and asparagine 110 are each glycosylated (N-linked (GlcNAc...) asparagine). 2 cysteine pairs are disulfide-bonded: cysteine 180–cysteine 192 and cysteine 202–cysteine 233.

Belongs to the peptidase S1 family. As to quaternary structure, forms an apoplastic complex with host endoglucanases in tomato leaves during P.infestans infection.

The protein resides in the secreted. In terms of biological role, secreted effector that suppresses host plant glucan elicitor-mediated defense responses. Targets host endoglucanases and inhibits the endoglucanase-mediated release of elicitor-active glucan oligosaccharides from P.infestans cell walls. The polypeptide is Glucanase inhibitor protein 3 (Phytophthora infestans (Potato late blight agent)).